Reading from the N-terminus, the 81-residue chain is UPF0180 protein BLi01634/BL05144 (81 aa).

The protein belongs to the UPF0180 family.

This is UPF0180 protein BLi01634/BL05144 from Bacillus licheniformis (strain ATCC 14580 / DSM 13 / JCM 2505 / CCUG 7422 / NBRC 12200 / NCIMB 9375 / NCTC 10341 / NRRL NRS-1264 / Gibson 46).